Consider the following 175-residue polypeptide: Transcriptional activatory protein BadR (175 aa).

The HTH marR-type domain maps to 20–156 (ANRLFFRLYQ…TLHYLLKILD (137 aa)).

Its function is as follows. Transcriptional activator of genes for the anaerobic degradation of benzoate. This chain is Transcriptional activatory protein BadR (badR), found in Rhodopseudomonas palustris (strain ATCC BAA-98 / CGA009).